A 520-amino-acid chain; its full sequence is MKIGPVLGIEGTAWNLSAALFDDDLIKLVSHPYKPVQGGIHPREAAQHHASVITSVIEEVLKGNPTPVAVAFSQGPGLGPCLRIVGTAARALALSFDVPLIGVNHCVAHVEIGRFASGFDDPVVLYASGANTQVLGYLQGRYRIFGETLDIGIGNAIDKFARSKGLPHPGGPEIERIAKNGSYIPLPYTVKGMDLAFSGLVSAAKDASAPLEDVCYSLQETAFAMCTEVTERALSQTGKEQLILVGGVGMNKRLQEMLSCMCEDRDAAFSVPNPQYLGDNGAMIAYTGRVMLESGSVLPVEESRVNPSYRADQVLVTWREEPSGSERHPDAYSARGAEAIVRFCDGAASKIRVSKRYRHPELDRRLIAERTRAEARLIAEARKAGVRTPIIREITQDTIIMEHIDGVKLKECLSPELLEETGRMVGKLHAAQIVHGDLTTCNFLVHDGKTWLIDFGLAGTSSDIEHRGVDIHVLFQVLESTSKDSDILKEAFIQGYREKMPLADEILNREHEIELRGRYL.

The interval 1 to 318 (MKIGPVLGIE…YRADQVLVTW (318 aa)) is kae1. Fe cation-binding residues include histidine 105, histidine 109, and tyrosine 126. L-threonylcarbamoyladenylate is bound by residues 126–130 (YASGA), aspartate 158, glycine 171, glutamate 175, and asparagine 251. Fe cation is bound at residue aspartate 279. One can recognise a Protein kinase domain in the interval 327–520 (RHPDAYSARG…HEIELRGRYL (194 aa)). Residues 333–341 (SARGAEAIV) and lysine 350 contribute to the ATP site. The Proton acceptor; for kinase activity role is filled by aspartate 437.

In the N-terminal section; belongs to the KAE1 / TsaD family. It in the C-terminal section; belongs to the protein kinase superfamily. Tyr protein kinase family. BUD32 subfamily. As to quaternary structure, component of the KEOPS complex that consists of Kae1, Bud32, Cgi121 and Pcc1; the whole complex dimerizes. Fe(2+) is required as a cofactor.

The protein localises to the cytoplasm. It catalyses the reaction L-seryl-[protein] + ATP = O-phospho-L-seryl-[protein] + ADP + H(+). It carries out the reaction L-threonyl-[protein] + ATP = O-phospho-L-threonyl-[protein] + ADP + H(+). The enzyme catalyses L-threonylcarbamoyladenylate + adenosine(37) in tRNA = N(6)-L-threonylcarbamoyladenosine(37) in tRNA + AMP + H(+). Its function is as follows. Required for the formation of a threonylcarbamoyl group on adenosine at position 37 (t(6)A37) in tRNAs that read codons beginning with adenine. Is a component of the KEOPS complex that is probably involved in the transfer of the threonylcarbamoyl moiety of threonylcarbamoyl-AMP (TC-AMP) to the N6 group of A37. The Kae1 domain likely plays a direct catalytic role in this reaction. The Bud32 domain probably displays kinase activity that regulates Kae1 function. The protein is Probable bifunctional tRNA threonylcarbamoyladenosine biosynthesis protein of Methanospirillum hungatei JF-1 (strain ATCC 27890 / DSM 864 / NBRC 100397 / JF-1).